Consider the following 431-residue polypeptide: MAPSVRARFAPSPTGDLHLGGARTALFNYLFARHHGGRLLLRIEDTDRQRSRREHEERILEDLGWLGLRFDEGPYRQSERGEVYAGYAGRLLEGGLAYEAEDASGRRAVYFRPPERGGAFRDALRGEVRFGGVRDFVILKSDGMPAYNFAAVVDDIEMEITHVIRGEEHLPNTGRQALLYRALGVPEPEFLHLGLILGPDGRKLSKRHGAQSVRGYREEGYLPEALLNYLALLGWTHPEGREEFSGLEELVAEWDPSRLGSSPARFDPQRLLYFNARHLRRLPARRLARLVEPFLEEPLPPGREEVAVEAVREELRLLSDAPRLLGRLLGPVDPGAAAGRPPGGAGEALAAASRLLESRRPEGLEEARELLAALRRWAKERGIKAREALHPLRVALTGEDRGPRLEYIIVLLGPEEAQKRIERAREARLRA.

The 'HIGH' region motif lies at 11 to 21 (PSPTGDLHLGG). Residues 203-207 (KLSKR) carry the 'KMSKS' region motif. Residue lysine 206 participates in ATP binding.

This sequence belongs to the class-I aminoacyl-tRNA synthetase family. Glutamate--tRNA ligase type 1 subfamily. Monomer.

Its subcellular location is the cytoplasm. It carries out the reaction tRNA(Glu) + L-glutamate + ATP = L-glutamyl-tRNA(Glu) + AMP + diphosphate. Its function is as follows. Catalyzes the attachment of glutamate to tRNA(Glu) in a two-step reaction: glutamate is first activated by ATP to form Glu-AMP and then transferred to the acceptor end of tRNA(Glu). This is Glutamate--tRNA ligase 1 from Rubrobacter xylanophilus (strain DSM 9941 / JCM 11954 / NBRC 16129 / PRD-1).